The following is a 498-amino-acid chain: Glycerol kinase (498 aa).

T14 contacts ADP. ATP-binding residues include T14 and T15. T14 lines the sn-glycerol 3-phosphate pocket. Residue R18 participates in ADP binding. R84, E85, Y136, and D246 together coordinate sn-glycerol 3-phosphate. 5 residues coordinate glycerol: R84, E85, Y136, D246, and Q247. T268 and G311 together coordinate ADP. ATP is bound by residues T268, G311, Q315, and G412. Residues G412 and N416 each contribute to the ADP site.

This sequence belongs to the FGGY kinase family.

The catalysed reaction is glycerol + ATP = sn-glycerol 3-phosphate + ADP + H(+). It participates in polyol metabolism; glycerol degradation via glycerol kinase pathway; sn-glycerol 3-phosphate from glycerol: step 1/1. Inhibited by fructose 1,6-bisphosphate (FBP). Functionally, key enzyme in the regulation of glycerol uptake and metabolism. Catalyzes the phosphorylation of glycerol to yield sn-glycerol 3-phosphate. This Leptospira biflexa serovar Patoc (strain Patoc 1 / Ames) protein is Glycerol kinase.